A 91-amino-acid chain; its full sequence is Small ribosomal subunit protein bS6 (91 aa).

This sequence belongs to the bacterial ribosomal protein bS6 family.

In terms of biological role, binds together with bS18 to 16S ribosomal RNA. The protein is Small ribosomal subunit protein bS6 of Leptospira biflexa serovar Patoc (strain Patoc 1 / Ames).